The sequence spans 225 residues: MPATPQQPSGHTEGLTEPTSEAAMWVVIPCGPCIPIMLGLASLTAFFIITTAVLAERLFRRPQPDPSQRAPTLVWRPGGELWIEPTSSARERSEDWYGSSIPLLMDRAPDPPTPGGTLEGRATAPPAIPTPHPSPSSLVPQTPPEVPAQSTFWRPQTQEESPYATGLVSWVGPEPMAEAGLEVGSPRAWRLRQGSLEPDWSLQPRVTLEQISAFWKREGRTSVGF.

The chain crosses the membrane as a helical span at residues 34–54; the sequence is IPIMLGLASLTAFFIITTAVL. Residues 107-149 are disordered; it reads RAPDPPTPGGTLEGRATAPPAIPTPHPSPSSLVPQTPPEVPAQ. Phosphothreonine occurs at positions 113 and 117. Ser195 is subject to Phosphoserine.

The protein resides in the membrane. The polypeptide is Transmembrane protein C16orf54 homolog (Rattus norvegicus (Rat)).